Reading from the N-terminus, the 338-residue chain is Phospho-2-dehydro-3-deoxyheptonate aldolase (338 aa).

It belongs to the class-I DAHP synthase family. In terms of assembly, homotetramer. A divalent metal cation is required as a cofactor.

It carries out the reaction D-erythrose 4-phosphate + phosphoenolpyruvate + H2O = 7-phospho-2-dehydro-3-deoxy-D-arabino-heptonate + phosphate. It participates in metabolic intermediate biosynthesis; chorismate biosynthesis; chorismate from D-erythrose 4-phosphate and phosphoenolpyruvate: step 1/7. Inhibited by L-phenylalanine and L-tyrosine. Catalyzes the condensation of phosphoenolpyruvate (PEP) and D-erythrose-4-phosphate (E4P) giving rise to 3-deoxy-D-arabino-heptulosonate-7-phosphate (DAHP). The chain is Phospho-2-dehydro-3-deoxyheptonate aldolase (aroF) from Thermotoga maritima (strain ATCC 43589 / DSM 3109 / JCM 10099 / NBRC 100826 / MSB8).